The sequence spans 128 residues: Glycine cleavage system H protein (128 aa).

Residues 24–106 (VYTVGITEHA…YAEGFLFQIK (83 aa)) form the Lipoyl-binding domain. Lys65 carries the N6-lipoyllysine modification.

This sequence belongs to the GcvH family. The glycine cleavage system is composed of four proteins: P, T, L and H. (R)-lipoate is required as a cofactor.

Its function is as follows. The glycine cleavage system catalyzes the degradation of glycine. The H protein shuttles the methylamine group of glycine from the P protein to the T protein. The chain is Glycine cleavage system H protein from Serratia proteamaculans (strain 568).